The sequence spans 663 residues: Cytoplasmic dynein 1 intermediate chain (663 aa).

Residues 17-37 show a composition bias toward basic and acidic residues; the sequence is LREEKDRRRREKEIKDMEEAA. Disordered regions lie at residues 17–52 and 75–107; these read LREE…DQRK and SVNS…KKQP. The span at 75–85 shows a compositional bias: low complexity; it reads SVNSMTSDNSN. Over residues 86–99 the composition is skewed to polar residues; the sequence is TQTPDASLQATVNG. WD repeat units follow at residues 311–360, 364–404, 413–454, 463–503, 508–553, 556–596, and 602–641; these read SKNR…STPE, HCQS…RTPI, AHTH…QPQD, SKAI…SGVN, RHLG…PLYS, DNSD…EVPT, and AGAP…AQPS.

The protein belongs to the dynein intermediate chain family. As to quaternary structure, homodimer. The cytoplasmic dynein 1 complex consists of two catalytic heavy chains (HCs) and a number of non-catalytic subunits presented by intermediate chains (ICs), light intermediate chains (LICs) and light chains (LCs). High levels of isoform 1b, isoform 1c, isoform 3a and isoform 4 accumulate in early egg chambers and at stage 9 become concentrated at the posterior of the oocyte. Isoform 5a and isoform 5b are highly expressed in adult head and to a lesser extent in adult torso. Isoform 1a, isoform 2a and isoform 2b are found in all tissues examined, including ovaries, midgut, torso and head.

It localises to the cytoplasm. It is found in the cytoskeleton. The protein resides in the lysosome membrane. Its subcellular location is the nucleus membrane. In terms of biological role, acts as one of several non-catalytic accessory components of the cytoplasmic dynein 1 complex that are thought to be involved in linking dynein to cargos and to adapter proteins that regulate dynein function. Cytoplasmic dynein 1 acts as a motor for the intracellular retrograde motility of vesicles and organelles along microtubules. The intermediate chains mediate the help dynein bind to dynactin 150 kDa component. The chain is Cytoplasmic dynein 1 intermediate chain (sw) from Drosophila melanogaster (Fruit fly).